The following is a 534-amino-acid chain: NAD(P)H-quinone oxidoreductase chain 4 (534 aa).

Helical transmembrane passes span 12–32, 44–64, 94–114, 120–140, 144–164, 176–196, 220–240, 251–271, 285–305, 314–334, 340–360, 384–404, 425–445, and 472–492; these read FPWL…IPFF, FALS…INGF, ISMP…LAAW, PKLF…VFAV, LLFF…LAIW, FIIY…AMGF, ILCY…VPLH, TAPV…YALL, FAPL…LTSF, IAYS…SFSS, AMLQ…LVGA, FALW…SGFV, VIMA…LLSM, and VYII…PRLV.

Belongs to the complex I subunit 4 family.

The protein localises to the cellular thylakoid membrane. It carries out the reaction a plastoquinone + NADH + (n+1) H(+)(in) = a plastoquinol + NAD(+) + n H(+)(out). The catalysed reaction is a plastoquinone + NADPH + (n+1) H(+)(in) = a plastoquinol + NADP(+) + n H(+)(out). NDH-1 shuttles electrons from NAD(P)H, via FMN and iron-sulfur (Fe-S) centers, to quinones in the respiratory chain. The immediate electron acceptor for the enzyme in this species is believed to be plastoquinone. Couples the redox reaction to proton translocation (for every two electrons transferred, four hydrogen ions are translocated across the cytoplasmic membrane), and thus conserves the redox energy in a proton gradient. The protein is NAD(P)H-quinone oxidoreductase chain 4 of Prochlorococcus marinus (strain MIT 9312).